We begin with the raw amino-acid sequence, 240 residues long: Myogenic factor 6 (240 aa).

Residues 91–142 form the bHLH domain; that stretch reads DRRKAATLRERRRLKKINEAFEALKRRTVANPNQRLPKVEILRSAINYIERL.

As to quaternary structure, efficient DNA binding requires dimerization with another bHLH protein. Skeletal muscle.

The protein localises to the nucleus. Its function is as follows. Involved in muscle differentiation (myogenic factor). Induces fibroblasts to differentiate into myoblasts. Probable sequence specific DNA-binding protein. The chain is Myogenic factor 6 (myf6) from Xenopus laevis (African clawed frog).